Here is a 375-residue protein sequence, read N- to C-terminus: CMP-N-acetylneuraminate-beta-1,4-galactoside alpha-2,3-sialyltransferase (375 aa).

The Cytoplasmic segment spans residues 1–8 (MGLLVFVR). The chain crosses the membrane as a helical; Signal-anchor for type II membrane protein span at residues 9–28 (NLLLALCLFLVLGFLYYSAW). The Lumenal segment spans residues 29–375 (KLHLLQWEED…RVITDLSSGI (347 aa)). N-linked (GlcNAc...) asparagine glycosylation is found at Asn-80 and Asn-171. The cysteines at positions 160 and 314 are disulfide-linked.

It belongs to the glycosyltransferase 29 family. Post-translationally, the soluble form derives from the membrane form by proteolytic processing. As to expression, highly expressed in adult skeletal muscle and in all fetal tissues examined and to a much lesser extent in placenta, lung and liver.

Its subcellular location is the golgi apparatus. It localises to the golgi stack membrane. The protein localises to the secreted. It catalyses the reaction a beta-D-galactosyl-(1-&gt;4)-N-acetyl-beta-D-glucosaminyl derivative + CMP-N-acetyl-beta-neuraminate = an N-acetyl-alpha-neuraminyl-(2-&gt;3)-beta-D-galactosyl-(1-&gt;4)-N-acetyl-beta-D-glucosaminyl derivative + CMP + H(+). The protein operates within protein modification; protein glycosylation. Its function is as follows. Catalyzes the formation of the NeuAc-alpha-2,3-Gal-beta-1,4-GlcNAc-, NeuAc-alpha-2,3-Gal-beta-1,3-GlcNAc- and NeuAc-alpha-2,3-Gal-beta-1,3-GalNAc- sequences found in terminal carbohydrate groups of glycoproteins and glycolipids. The highest activity is toward Gal-beta-1,3-GlcNAc and the lowest toward Gal-beta-1,3-GalNAc. The polypeptide is CMP-N-acetylneuraminate-beta-1,4-galactoside alpha-2,3-sialyltransferase (ST3GAL3) (Homo sapiens (Human)).